Consider the following 159-residue polypeptide: MKCPFCGGVENKVMDSRVSRDGNAIRRRRECLACGRRFTTYEYIEEMLPTVVKKDGRREPFDRNKIRMGIRKACEKRPISTETIESLVTEVERFCQDYSGEEIRSSMIGEKIMKLLKELDGVAYVRFASVYRQFRDVNDFLEELKEFKQLHDLKKEKEP.

A zinc finger spans residues 3-34 (CPFCGGVENKVMDSRVSRDGNAIRRRRECLAC). The ATP-cone domain maps to 49–139 (PTVVKKDGRR…VYRQFRDVND (91 aa)).

It belongs to the NrdR family. It depends on Zn(2+) as a cofactor.

Negatively regulates transcription of bacterial ribonucleotide reductase nrd genes and operons by binding to NrdR-boxes. The sequence is that of Transcriptional repressor NrdR from Syntrophus aciditrophicus (strain SB).